Here is a 284-residue protein sequence, read N- to C-terminus: UPF0276 protein PA14_21580 (284 aa).

It belongs to the UPF0276 family.

The sequence is that of UPF0276 protein PA14_21580 from Pseudomonas aeruginosa (strain UCBPP-PA14).